A 159-amino-acid polypeptide reads, in one-letter code: Phosphopantetheine adenylyltransferase (159 aa).

ATP is bound at residue His-16. 3 residues coordinate substrate: Lys-40, Met-72, and Arg-86. Residues 87–89 (GLR), Glu-97, and 122–128 (YQYLSAS) each bind ATP.

It belongs to the bacterial CoaD family. In terms of assembly, homohexamer. Mg(2+) is required as a cofactor.

It is found in the cytoplasm. It carries out the reaction (R)-4'-phosphopantetheine + ATP + H(+) = 3'-dephospho-CoA + diphosphate. Its pathway is cofactor biosynthesis; coenzyme A biosynthesis; CoA from (R)-pantothenate: step 4/5. Its function is as follows. Reversibly transfers an adenylyl group from ATP to 4'-phosphopantetheine, yielding dephospho-CoA (dPCoA) and pyrophosphate. The sequence is that of Phosphopantetheine adenylyltransferase from Dehalococcoides mccartyi (strain ATCC BAA-2100 / JCM 16839 / KCTC 5957 / BAV1).